A 64-amino-acid polypeptide reads, in one-letter code: Large ribosomal subunit protein bL28 (64 aa).

Positions 1 to 21 are disordered; it reads MAKKDQLTLRGPLYGNNRSHS.

Belongs to the bacterial ribosomal protein bL28 family.

The chain is Large ribosomal subunit protein bL28 from Mycoplasma genitalium (strain ATCC 33530 / DSM 19775 / NCTC 10195 / G37) (Mycoplasmoides genitalium).